A 255-amino-acid chain; its full sequence is Acetylglutamate kinase (255 aa).

Residues 40–41 (GG), arginine 62, and asparagine 153 contribute to the substrate site.

The protein belongs to the acetylglutamate kinase family. ArgB subfamily.

The protein localises to the cytoplasm. The catalysed reaction is N-acetyl-L-glutamate + ATP = N-acetyl-L-glutamyl 5-phosphate + ADP. The protein operates within amino-acid biosynthesis; L-arginine biosynthesis; N(2)-acetyl-L-ornithine from L-glutamate: step 2/4. Its function is as follows. Catalyzes the ATP-dependent phosphorylation of N-acetyl-L-glutamate. In Bacillus thuringiensis (strain Al Hakam), this protein is Acetylglutamate kinase.